The chain runs to 105 residues: uncharacterized protein (105 aa).

The next 2 membrane-spanning stretches (helical) occupy residues 26–46 and 66–86; these read NVLI…CIAI and SALA…TLAI.

Its subcellular location is the cell membrane. This is an uncharacterized protein from Mycoplasma pneumoniae (strain ATCC 29342 / M129 / Subtype 1) (Mycoplasmoides pneumoniae).